The sequence spans 567 residues: 2-succinyl-5-enolpyruvyl-6-hydroxy-3-cyclohexene-1-carboxylate synthase (567 aa).

Belongs to the TPP enzyme family. MenD subfamily. In terms of assembly, homodimer. Requires Mg(2+) as cofactor. Mn(2+) serves as cofactor. It depends on thiamine diphosphate as a cofactor.

The enzyme catalyses isochorismate + 2-oxoglutarate + H(+) = 5-enolpyruvoyl-6-hydroxy-2-succinyl-cyclohex-3-ene-1-carboxylate + CO2. It functions in the pathway quinol/quinone metabolism; 1,4-dihydroxy-2-naphthoate biosynthesis; 1,4-dihydroxy-2-naphthoate from chorismate: step 2/7. It participates in quinol/quinone metabolism; menaquinone biosynthesis. Catalyzes the thiamine diphosphate-dependent decarboxylation of 2-oxoglutarate and the subsequent addition of the resulting succinic semialdehyde-thiamine pyrophosphate anion to isochorismate to yield 2-succinyl-5-enolpyruvyl-6-hydroxy-3-cyclohexene-1-carboxylate (SEPHCHC). The polypeptide is 2-succinyl-5-enolpyruvyl-6-hydroxy-3-cyclohexene-1-carboxylate synthase (Yersinia pestis bv. Antiqua (strain Antiqua)).